The chain runs to 241 residues: Uridylate kinase (241 aa).

12–15 serves as a coordination point for ATP; sequence KLSG. An involved in allosteric activation by GTP region spans residues 20–25; that stretch reads GATGYG. A UMP-binding site is contributed by G54. ATP-binding residues include G55 and R59. UMP-binding positions include D74 and 135 to 142; that span reads TGNPYMTT. The ATP site is built by N163, Y169, and D172.

This sequence belongs to the UMP kinase family. In terms of assembly, homohexamer.

It is found in the cytoplasm. It catalyses the reaction UMP + ATP = UDP + ADP. Its pathway is pyrimidine metabolism; CTP biosynthesis via de novo pathway; UDP from UMP (UMPK route): step 1/1. Its activity is regulated as follows. Allosterically activated by GTP. Inhibited by UTP. In terms of biological role, catalyzes the reversible phosphorylation of UMP to UDP. This chain is Uridylate kinase, found in Dehalococcoides mccartyi (strain CBDB1).